The following is a 160-amino-acid chain: MSDVENQPFFNIQRVYLKDMSLEQPNSPAIFLEQDMPSVEVEVDVKAERLAESVFEVVVSGTVTAKVKDKVAFLIEAKQAGIFDIRNIPDEQLDPLVGIACPTILFPYLRSNIADAITRAGFPPIHLAEINFQALYEQRLAQLQQQQAGAAGAPNGTALN.

Belongs to the SecB family. Homotetramer, a dimer of dimers. One homotetramer interacts with 1 SecA dimer.

It is found in the cytoplasm. In terms of biological role, one of the proteins required for the normal export of preproteins out of the cell cytoplasm. It is a molecular chaperone that binds to a subset of precursor proteins, maintaining them in a translocation-competent state. It also specifically binds to its receptor SecA. In Burkholderia multivorans (strain ATCC 17616 / 249), this protein is Protein-export protein SecB.